The sequence spans 208 residues: Methyl-CpG-binding domain protein 3-like 3 (208 aa).

It belongs to the MBD3L family.

In Homo sapiens (Human), this protein is Methyl-CpG-binding domain protein 3-like 3 (MBD3L3).